We begin with the raw amino-acid sequence, 485 residues long: tRNA sulfurtransferase (485 aa).

The 105-residue stretch at 63 to 167 (ERYAERLACI…NEHLYLVEKR (105 aa)) folds into the THUMP domain. Residues 185-186 (LI), lysine 267, glycine 289, and glutamine 298 contribute to the ATP site. A disulfide bridge connects residues cysteine 346 and cysteine 458. The Rhodanese domain occupies 406–484 (VSGGEVVVDI…GYHNVKVYRP (79 aa)). Cysteine 458 (cysteine persulfide intermediate) is an active-site residue.

This sequence belongs to the ThiI family.

It is found in the cytoplasm. It carries out the reaction [ThiI sulfur-carrier protein]-S-sulfanyl-L-cysteine + a uridine in tRNA + 2 reduced [2Fe-2S]-[ferredoxin] + ATP + H(+) = [ThiI sulfur-carrier protein]-L-cysteine + a 4-thiouridine in tRNA + 2 oxidized [2Fe-2S]-[ferredoxin] + AMP + diphosphate. The catalysed reaction is [ThiS sulfur-carrier protein]-C-terminal Gly-Gly-AMP + S-sulfanyl-L-cysteinyl-[cysteine desulfurase] + AH2 = [ThiS sulfur-carrier protein]-C-terminal-Gly-aminoethanethioate + L-cysteinyl-[cysteine desulfurase] + A + AMP + 2 H(+). Its pathway is cofactor biosynthesis; thiamine diphosphate biosynthesis. Functionally, catalyzes the ATP-dependent transfer of a sulfur to tRNA to produce 4-thiouridine in position 8 of tRNAs, which functions as a near-UV photosensor. Also catalyzes the transfer of sulfur to the sulfur carrier protein ThiS, forming ThiS-thiocarboxylate. This is a step in the synthesis of thiazole, in the thiamine biosynthesis pathway. The sulfur is donated as persulfide by IscS. This is tRNA sulfurtransferase from Shewanella loihica (strain ATCC BAA-1088 / PV-4).